A 433-amino-acid chain; its full sequence is D-amino acid dehydrogenase (433 aa).

FAD is bound at residue 3–17 (VVILGSGVVGVASAW).

This sequence belongs to the DadA oxidoreductase family. Requires FAD as cofactor.

The catalysed reaction is a D-alpha-amino acid + A + H2O = a 2-oxocarboxylate + AH2 + NH4(+). It functions in the pathway amino-acid degradation; D-alanine degradation; NH(3) and pyruvate from D-alanine: step 1/1. In terms of biological role, oxidative deamination of D-amino acids. This chain is D-amino acid dehydrogenase, found in Erwinia tasmaniensis (strain DSM 17950 / CFBP 7177 / CIP 109463 / NCPPB 4357 / Et1/99).